Consider the following 288-residue polypeptide: Programmed cell death protein 1 (288 aa).

The first 24 residues, 1–24 (MQIPQAPWPVVWAVLQLGWRPGWF), serve as a signal peptide directing secretion. Residues 25–34 (LDSPDRPWNP) form a nivolumab binding region. At 25 to 170 (LDSPDRPWNP…RPAGQFQTLV (146 aa)) the chain is on the extracellular side. Residues 35–145 (PTFSPALLVV…ESLRAELRVT (111 aa)) form the Ig-like V-type domain. Residues Asn-49, Asn-58, Asn-74, and Asn-116 are each glycosylated (N-linked (GlcNAc...) asparagine). Residues Cys-54 and Cys-123 are joined by a disulfide bond. An interaction with CD274/PDCD1L1 region spans residues 70-77 (MSPSNQTD). The tract at residues 74 to 99 (NQTDKLAAFPEDRSQPGQDCRFRVTQ) is pembrolizumab binding. Residues 171–191 (VGVVGGLLGSLVLLVWVLAVI) form a helical membrane-spanning segment. The Cytoplasmic portion of the chain corresponds to 192 to 288 (CSRAARGTIG…PEDGHCSWPL (97 aa)). An ITIM motif motif is present at residues 221 to 226 (VDYGEL). Residue Tyr-223 is modified to Phosphotyrosine. Lys-233 is covalently cross-linked (Glycyl lysine isopeptide (Lys-Gly) (interchain with G-Cter in ubiquitin)). At Thr-234 the chain carries Phosphothreonine; by MAPK3. Residues 247-251 (EYATI) carry the ITSM motif motif. Residue Tyr-248 is modified to Phosphotyrosine. Positions 254–288 (PSGMGTSSPARRGSADGPRSAQPLRPEDGHCSWPL) are disordered. Residues 278–288 (RPEDGHCSWPL) are compositionally biased toward basic and acidic residues.

In terms of assembly, monomer. Interacts with CD274/PDCD1L1. Interacts with CD273/PDCD1LG2. Interacts with FBXO38; leading to ubiquitination and degradation of PDCD1 by the proteasome. In terms of processing, ubiquitinated at Lys-233 by the SCF(FBXO38) complex, leading to its proteasomal degradation. Ubiquitinated via 'Lys-48'-linked polyubiquitin chains. Deubiquitinated and thus stabilized by USP5. Post-translationally, tyrosine phosphorylated at Tyr-223 (within ITIM motif) and Tyr-248 (ITSM motif) upon ligand binding. Phosphorylation at Tyr-248 promotes the recruitment of the protein tyrosine phosphatase PTPN11/SHP-2 that mediates dephosphorylation of key TCR proximal signaling molecules, such as ZAP70, PRKCQ/PKCtheta and CD247/CD3zeta. Phosphorylation at Thr-234 promotes the recruitment of the deubiquitinase USP5. N-glycosylation at Asn-58 contains at least two N-acetylglucosamine units and one fucose. N-glycosylation does not affect binding to nivolumab drug.

It is found in the cell membrane. Inhibited by pembrolizumab (also named MK-3475 or lambrolizumab), a monoclonal antibody that prevents the interaction with CD274/PDCD1L1. Inhibited by nivolumab (also named ONO-4538, BMS-936558 or Opdivo), a monoclonal antibody that prevents the interaction with CD274/PDCD1L1. The interaction with nivolumab is not dependent on glycosylation and depends on a loop at the N-terminus (N-terminal loop, corresponding to residues 25-34). Targeting the interaction between PDCD1 and CD274/PDCD1L1 with pembrolizumab and nivolumab antibodies has demonstrated great promise as a strategy for controlling and eradicating cancer. Pembrolizumab and nivolumab are used for treatment of patients with advanced melanoma. These antibodies are also effective against other cancers, such as non-small cell lung cancer, renal cell carcinoma, bladder cancer and Hodgkin's lymphoma. Functionally, inhibitory receptor on antigen activated T-cells that plays a critical role in induction and maintenance of immune tolerance to self. Delivers inhibitory signals upon binding to ligands CD274/PDCD1L1 and CD273/PDCD1LG2. Following T-cell receptor (TCR) engagement, PDCD1 associates with CD3-TCR in the immunological synapse and directly inhibits T-cell activation. Suppresses T-cell activation through the recruitment of PTPN11/SHP-2: following ligand-binding, PDCD1 is phosphorylated within the ITSM motif, leading to the recruitment of the protein tyrosine phosphatase PTPN11/SHP-2 that mediates dephosphorylation of key TCR proximal signaling molecules, such as ZAP70, PRKCQ/PKCtheta and CD247/CD3zeta. Its function is as follows. The PDCD1-mediated inhibitory pathway is exploited by tumors to attenuate anti-tumor immunity and escape destruction by the immune system, thereby facilitating tumor survival. The interaction with CD274/PDCD1L1 inhibits cytotoxic T lymphocytes (CTLs) effector function. The blockage of the PDCD1-mediated pathway results in the reversal of the exhausted T-cell phenotype and the normalization of the anti-tumor response, providing a rationale for cancer immunotherapy. The sequence is that of Programmed cell death protein 1 from Homo sapiens (Human).